The following is a 705-amino-acid chain: Polyribonucleotide nucleotidyltransferase (705 aa).

Positions 486 and 492 each coordinate Mg(2+). Positions 553–612 (PRIYKIKINPEKIKDVIGKGGSVIRMLTEKTKSSIEIEDDGTVKVISTDIKNAQCALKKI) constitute a KH domain. The 69-residue stretch at 622-690 (NKIYVAKITR…RYGRIRLSFT (69 aa)) folds into the S1 motif domain.

This sequence belongs to the polyribonucleotide nucleotidyltransferase family. In terms of assembly, component of the RNA degradosome, which is a multiprotein complex involved in RNA processing and mRNA degradation. It depends on Mg(2+) as a cofactor.

Its subcellular location is the cytoplasm. It catalyses the reaction RNA(n+1) + phosphate = RNA(n) + a ribonucleoside 5'-diphosphate. Functionally, involved in mRNA degradation. Catalyzes the phosphorolysis of single-stranded polyribonucleotides processively in the 3'- to 5'-direction. This Wigglesworthia glossinidia brevipalpis protein is Polyribonucleotide nucleotidyltransferase.